The chain runs to 280 residues: Small ribosomal subunit protein uS2 (280 aa).

The protein belongs to the universal ribosomal protein uS2 family.

This chain is Small ribosomal subunit protein uS2, found in Desulforapulum autotrophicum (strain ATCC 43914 / DSM 3382 / VKM B-1955 / HRM2) (Desulfobacterium autotrophicum).